A 207-amino-acid polypeptide reads, in one-letter code: Probable GTP-binding protein EngB (207 aa).

One can recognise an EngB-type G domain in the interval 22-193 (RVPEIVFAGR…LAHFDHYLSG (172 aa)). GTP contacts are provided by residues 30–37 (GRSNVGKS), 57–61 (GKTRL), 75–78 (DIPG), 142–145 (TKDD), and 172–174 (YSS). Residues Ser-37 and Thr-59 each coordinate Mg(2+).

The protein belongs to the TRAFAC class TrmE-Era-EngA-EngB-Septin-like GTPase superfamily. EngB GTPase family. The cofactor is Mg(2+).

Its function is as follows. Necessary for normal cell division and for the maintenance of normal septation. The protein is Probable GTP-binding protein EngB of Chlorobium luteolum (strain DSM 273 / BCRC 81028 / 2530) (Pelodictyon luteolum).